Consider the following 69-residue polypeptide: Large ribosomal subunit protein bL31 (69 aa).

Positions 16, 18, 36, and 39 each coordinate Zn(2+).

The protein belongs to the bacterial ribosomal protein bL31 family. Type A subfamily. In terms of assembly, part of the 50S ribosomal subunit. Zn(2+) is required as a cofactor.

Its function is as follows. Binds the 23S rRNA. This chain is Large ribosomal subunit protein bL31, found in Thermosipho africanus (strain TCF52B).